A 177-amino-acid polypeptide reads, in one-letter code: Coatomer subunit zeta-1 (177 aa).

This sequence belongs to the adaptor complexes small subunit family. Oligomeric complex that consists of at least the alpha, beta, beta', gamma, delta, epsilon and zeta subunits.

Its subcellular location is the cytoplasm. It is found in the golgi apparatus membrane. It localises to the cytoplasmic vesicle. The protein localises to the COPI-coated vesicle membrane. Its function is as follows. The coatomer is a cytosolic protein complex that binds to dilysine motifs and reversibly associates with Golgi non-clathrin-coated vesicles, which further mediate biosynthetic protein transport from the ER, via the Golgi up to the trans Golgi network. Coatomer complex is required for budding from Golgi membranes, and is essential for the retrograde Golgi-to-ER transport of dilysine-tagged proteins. The zeta subunit may be involved in regulating the coat assembly and, hence, the rate of biosynthetic protein transport due to its association-dissociation properties with the coatomer complex. This is Coatomer subunit zeta-1 from Arabidopsis thaliana (Mouse-ear cress).